A 341-amino-acid chain; its full sequence is Phosphate acyltransferase (341 aa).

This sequence belongs to the PlsX family. As to quaternary structure, homodimer. Probably interacts with PlsY.

Its subcellular location is the cytoplasm. It carries out the reaction a fatty acyl-[ACP] + phosphate = an acyl phosphate + holo-[ACP]. It functions in the pathway lipid metabolism; phospholipid metabolism. Catalyzes the reversible formation of acyl-phosphate (acyl-PO(4)) from acyl-[acyl-carrier-protein] (acyl-ACP). This enzyme utilizes acyl-ACP as fatty acyl donor, but not acyl-CoA. The chain is Phosphate acyltransferase from Vibrio campbellii (strain ATCC BAA-1116).